The sequence spans 418 residues: PP2A regulatory subunit TAP46 (418 aa).

Residues 367-418 form a disordered region; that stretch reads KMIQESNSAWHKDGSRSAQEDEDAEEEKARAWDDWKDDNPRGAGNKKLTPCG. Composition is skewed to basic and acidic residues over residues 376-385 and 393-406; these read WHKDGSRSAQ and EKAR…DDNP.

This sequence belongs to the IGBP1/TAP42 family.

Its function is as follows. Involved in the regulation of the TOR signaling pathway. Seems to act as a regulator of PP2A catalytic activity. The polypeptide is PP2A regulatory subunit TAP46 (Oryza sativa subsp. japonica (Rice)).